The following is a 170-amino-acid chain: Prenyl-diphosphate phosphatase (170 aa).

The Nudix hydrolase domain occupies 25–155; it reads HIHRASQLIL…PGNYTPALRE (131 aa). The Nudix box signature appears at 59–83; that stretch reads YSVSGTVADESYEACIAREMLEEIG. 2 residues coordinate Mg(2+): Glu77 and Glu81.

Belongs to the Nudix hydrolase family. Mg(2+) is required as a cofactor.

It carries out the reaction dimethylallyl diphosphate + H2O = dimethylallyl phosphate + phosphate + H(+). It catalyses the reaction isopentenyl diphosphate + H2O = isopentenyl phosphate + phosphate + H(+). The enzyme catalyses (2E,6E)-farnesyl diphosphate + H2O = (2E,6E)-farnesyl phosphate + phosphate + H(+). The catalysed reaction is (2E)-geranyl diphosphate + H2O = (2E)-geranyl phosphate + phosphate + H(+). It participates in isoprenoid biosynthesis. Its function is as follows. Hydrolyzes homoallylic isopentenyl diphosphate (IPP), its allylic isomer dimethylallyl diphosphate (DMAPP) and short-chain prenyl diphosphates geranyl diphosphate (GPP) and farnesyl diphosphate (FPP) to their corresponding monophosphate forms with high activity. The preferred substrate is IPP. ADP, NADPH, Ap5A and thiamine diphosphate (TPP) are weakly hydrolyzed. No hydrolysis with ATP, dNTPs, 8-OH-dGTP, NAD+, FAD or acetyl-CoA. The likely physiological role of this enzyme is to provide a substrate dimethylallyl phosphate (DMAP) for prenylated flavin mononucleotide (prenyl-FMN) synthase MM_1871 involved in the biosynthesis of prenyl-FMN, a coenzyme required in the archaea-specific mevalonate pathway. The protein is Prenyl-diphosphate phosphatase of Methanosarcina mazei (strain ATCC BAA-159 / DSM 3647 / Goe1 / Go1 / JCM 11833 / OCM 88) (Methanosarcina frisia).